The following is a 155-amino-acid chain: Large ribosomal subunit protein eL24 (155 aa).

Basic and acidic residues predominate over residues 93–123 (KRNARPETRNATRAKHAEAAKERKEKEAERR). The tract at residues 93–155 (KRNARPETRN…SAPKVQATSR (63 aa)) is disordered.

This sequence belongs to the eukaryotic ribosomal protein eL24 family.

This chain is Large ribosomal subunit protein eL24 (RPL24), found in Yarrowia lipolytica (strain CLIB 122 / E 150) (Yeast).